The following is a 247-amino-acid chain: Homeobox-leucine zipper protein HOX17 (247 aa).

The segment at 58-81 is disordered; it reads ERAGLRGGGGSDEEDGGCGIDGSR. The segment at residues 79-138 is a DNA-binding region (homeobox); that stretch reads GSRKKLRLSKDQSAVLEDSFREHPTLNPRQKATLAQQLGLRPRQVEVWFQNRRARTKLKQ. The segment at 137-182 is leucine-zipper; that stretch reads KQTEVDCEFLKRCCETLTEENRRLQKEVQELRALKLVSPHLYMNMS.

Belongs to the HD-ZIP homeobox family. Class II subfamily. Expressed in seedlings, roots, stems, leaf sheaths and blades and panicles.

The protein resides in the nucleus. Probable transcription factor. The polypeptide is Homeobox-leucine zipper protein HOX17 (HOX17) (Oryza sativa subsp. japonica (Rice)).